A 649-amino-acid polypeptide reads, in one-letter code: Epithelial sodium channel subunit gamma (649 aa).

Residues Met-1–Leu-55 are Cytoplasmic-facing. A helical membrane pass occupies residues Trp-56–Phe-76. Over Ser-77–Cys-541 the chain is Extracellular. 8 cysteine pairs are disulfide-bonded: Cys-100/Cys-283, Cys-207/Cys-214, Cys-260/Cys-267, Cys-372/Cys-457, Cys-394/Cys-453, Cys-398/Cys-449, Cys-407/Cys-434, and Cys-409/Cys-423. Positions Arg-135–Ser-221 are gating release of inhibition by proteolysis (GRIP); protease-sensitive region that is responsible for the proteolytic activation of the channel. Asn-209 carries an N-linked (GlcNAc...) asparagine glycan. The N-linked (GlcNAc...) asparagine glycan is linked to Asn-497. The chain crosses the membrane as a helical span at residues Ser-542–Ala-562. Topologically, residues Arg-563–Leu-649 are cytoplasmic. The PY motif; recruits WW domain-containing proteins and is thereby required for ubiquitination and inhibition of the channel by NEDD4 and NEDD4L motif lies at Pro-623–Tyr-627.

Belongs to the amiloride-sensitive sodium channel (TC 1.A.6) family. SCNN1G subfamily. Component of the heterotrimeric epithelial sodium channel (ENaC) composed of an alpha/SCNN1A, a beta/SCNN1B and a gamma/SCNN1G subunit. An additional delta/SCNN1D subunit can replace the alpha/SCNN1A subunit to form an alternative channel with specific properties. Interacts with WWP1 (via WW domains). Interacts with WWP2 (via WW domains); inhibits the channel. Interacts with the full-length immature form of PCSK9 (pro-PCSK9); inhibits ENaC by promoting its proteasomal degradation. Interacts with BPIFA1; the interaction is indirect via SCNN1B and inhibits the proteolytic maturation of SCNN1A and SCNN1G and the activation of ENaC. Phosphorylated on serine and threonine residues. Aldosterone and insulin increase the basal level of phosphorylation. Post-translationally, ubiquitinated. Can be ubiquitinated at multiple sites and undergo monoubiquitination and polyubiquitination. Ubiquitination by NEDD4 or NEDD4L inhibits the ENaC channel through endocytosis, intracellular retention and degradation of its individual subunits. In terms of processing, ENaC is activated through the proteolytic maturation of its subunits. Furin cleaves the SCNN1G subunit first, followed by cleavage by prostasin (PRSS8), which results in a stepwise increase in the open probability of the channel due to the release of an inhibitory tract. BPIFA1, which is recruited by the SCNN1B subunit, prevents the proteolytic activation of ENaC. N-glycosylated. N-linked glycans are processed to complex type during ENaC complex assembly and transport to the plasma membrane. In terms of tissue distribution, expressed in kidney (at protein level).

The protein localises to the apical cell membrane. The enzyme catalyses Na(+)(in) = Na(+)(out). With respect to regulation, originally identified and characterized by its inhibition by the diuretic drug amiloride. Functionally, this is one of the three pore-forming subunits of the heterotrimeric epithelial sodium channel (ENaC), a critical regulator of sodium balance and fluid homeostasis. ENaC operates in epithelial tissues, where it mediates the electrodiffusion of sodium ions from extracellular fluid through the apical membrane of cells, with water following osmotically. It plays a key role in maintaining sodium homeostasis through electrogenic sodium reabsorption in the kidneys. Additionally, ENaC is essential for airway surface liquid homeostasis, which is crucial for proper mucus clearance. The sequence is that of Epithelial sodium channel subunit gamma from Homo sapiens (Human).